The sequence spans 564 residues: NAD-dependent malic enzyme (564 aa).

The Proton donor role is filled by Tyr102. Residue Arg155 coordinates NAD(+). The Proton acceptor role is filled by Lys173. Positions 244, 245, and 268 each coordinate a divalent metal cation. Asp268 and Asn417 together coordinate NAD(+).

It belongs to the malic enzymes family. As to quaternary structure, homotetramer. Requires Mg(2+) as cofactor. It depends on Mn(2+) as a cofactor.

It carries out the reaction (S)-malate + NAD(+) = pyruvate + CO2 + NADH. It catalyses the reaction oxaloacetate + H(+) = pyruvate + CO2. This chain is NAD-dependent malic enzyme, found in Pseudomonas aeruginosa (strain LESB58).